A 322-amino-acid chain; its full sequence is tRNA-modifying protein YgfZ (322 aa).

Trp-182 is a binding site for folate.

Belongs to the tRNA-modifying YgfZ family.

The protein localises to the cytoplasm. Its function is as follows. Folate-binding protein involved in regulating the level of ATP-DnaA and in the modification of some tRNAs. It is probably a key factor in regulatory networks that act via tRNA modification, such as initiation of chromosomal replication. The polypeptide is tRNA-modifying protein YgfZ (Vibrio parahaemolyticus serotype O3:K6 (strain RIMD 2210633)).